The chain runs to 663 residues: Meiotically up-regulated gene 60 protein (663 aa).

Positions 578–644 (PAEMHFYVPE…SENLWAVRSL (67 aa)) constitute a KH domain.

The protein resides in the cytoplasm. Its subcellular location is the nucleus. It is found in the cytoskeleton. It localises to the microtubule organizing center. The protein localises to the spindle pole body. Has a role in meiosis. The polypeptide is Meiotically up-regulated gene 60 protein (mug60) (Schizosaccharomyces pombe (strain 972 / ATCC 24843) (Fission yeast)).